Here is a 264-residue protein sequence, read N- to C-terminus: Small ribosomal subunit protein eS1 (264 aa).

Lys34 bears the N6-acetyllysine; alternate mark. A Glycyl lysine isopeptide (Lys-Gly) (interchain with G-Cter in SUMO2); alternate cross-link involves residue Lys34. Lys56 is subject to N6-acetyllysine. Position 155 is an ADP-ribosyltyrosine (Tyr155). The segment at 233–264 (GEGGSSGKAAGDETGAKVERADGYEPPVQESV) is disordered. Residue Ser237 is modified to Phosphoserine. The span at 242–255 (AGDETGAKVERADG) shows a compositional bias: basic and acidic residues. At Lys249 the chain carries N6-acetyllysine; alternate. Lys249 participates in a covalent cross-link: Glycyl lysine isopeptide (Lys-Gly) (interchain with G-Cter in SUMO2); alternate. Tyr256 is modified (phosphotyrosine). Phosphoserine is present on Ser263.

The protein belongs to the eukaryotic ribosomal protein eS1 family. In terms of assembly, component of the small ribosomal subunit. Mature ribosomes consist of a small (40S) and a large (60S) subunit. The 40S subunit contains about 33 different proteins and 1 molecule of RNA (18S). The 60S subunit contains about 49 different proteins and 3 molecules of RNA (28S, 5.8S and 5S). Identified in a IGF2BP1-dependent mRNP granule complex containing untranslated mRNAs. Binds with high affinity to IPO4. Interacts with DDIT3. Part of the small subunit (SSU) processome, composed of more than 70 proteins and the RNA chaperone small nucleolar RNA (snoRNA) U3. ADP-ribosylated at Tyr-155 by PARP1 in presence of HPF1.

The protein localises to the cytoplasm. It localises to the nucleus. The protein resides in the nucleolus. Its function is as follows. Component of the small ribosomal subunit. The ribosome is a large ribonucleoprotein complex responsible for the synthesis of proteins in the cell. Part of the small subunit (SSU) processome, first precursor of the small eukaryotic ribosomal subunit. During the assembly of the SSU processome in the nucleolus, many ribosome biogenesis factors, an RNA chaperone and ribosomal proteins associate with the nascent pre-rRNA and work in concert to generate RNA folding, modifications, rearrangements and cleavage as well as targeted degradation of pre-ribosomal RNA by the RNA exosome. May play a role during erythropoiesis through regulation of transcription factor DDIT3. In Mus musculus (Mouse), this protein is Small ribosomal subunit protein eS1 (Rps3a).